The sequence spans 381 residues: Fatty acid elongase 6 (381 aa).

The next 7 membrane-spanning stretches (helical) occupy residues 10-30, 69-89, 107-127, 153-173, 182-202, 216-236, and 280-300; these read IAAA…LVYS, LPYL…SLIV, GLVH…GLMI, LIWL…IMLL, FLHV…LLVA, GVHV…SGIV, and LLQI…NFLV. A HxxHH motif motif is present at residues 184–188; that stretch reads HVYHH. Histidine 187 acts as the Nucleophile in catalysis. Residues 362–381 are disordered; the sequence is RKNGNGNGQKASLQAMAGSR.

Belongs to the ELO family.

The protein resides in the membrane. The protein operates within lipid metabolism; polyunsaturated fatty acid biosynthesis. Its function is as follows. Involved in the synthesis of fatty acids. Elongates C18 polyunsaturated fatty acids (PUFAs) with a preference for Delta6 PUFAs. The protein is Fatty acid elongase 6 of Leishmania major.